Reading from the N-terminus, the 97-residue chain is Large ribosomal subunit protein uL23 (97 aa).

It belongs to the universal ribosomal protein uL23 family. Part of the 50S ribosomal subunit. Contacts protein L29, and trigger factor when it is bound to the ribosome.

Functionally, one of the early assembly proteins it binds 23S rRNA. One of the proteins that surrounds the polypeptide exit tunnel on the outside of the ribosome. Forms the main docking site for trigger factor binding to the ribosome. The chain is Large ribosomal subunit protein uL23 from Lactococcus lactis subsp. cremoris (strain SK11).